Here is a 331-residue protein sequence, read N- to C-terminus: Geranylgeranyl transferase type-2 subunit beta (331 aa).

At glycine 2 the chain carries N-acetylglycine. Threonine 3 carries the post-translational modification Phosphothreonine. 6 PFTB repeats span residues 20 to 61 (LEKH…DLMG), 68 to 109 (REEI…TLYD), 116 to 157 (VNKV…ALLG), 164 to 205 (VEKA…AITS), 212 to 253 (SDLL…KIIG), and 260 to 302 (REKL…SLLG). 190–192 (HAG) is a geranylgeranyl diphosphate binding site. Residues aspartate 238 and cysteine 240 each coordinate Zn(2+). 241 to 244 (YSWW) lines the geranylgeranyl diphosphate pocket. Residue histidine 290 coordinates Zn(2+).

The protein belongs to the protein prenyltransferase subunit beta family. As to quaternary structure, heterotrimer composed of RABGGTA, RABGGTB and CHM; within this trimer, RABGGTA and RABGGTB form the catalytic component B, while CHM (component A) mediates peptide substrate binding. The Rab GGTase dimer (RGGT) interacts with CHM (component A) prior to Rab protein binding; the association is stabilized by geranylgeranyl pyrophosphate (GGpp). The CHM:RGGT:Rab complex is destabilized by GGpp. Interaction of RABGGTB with prenylated PTP4A2 precludes its association with RABGGTA and inhibits enzyme activity. Interacts with CHODL. Interacts with non-phosphorylated form of RAB8A; phosphorylation of RAB8A at 'Thr-72' disrupts this interaction. Zn(2+) is required as a cofactor.

The enzyme catalyses geranylgeranyl diphosphate + L-cysteinyl-[protein] = S-geranylgeranyl-L-cysteinyl-[protein] + diphosphate. Its activity is regulated as follows. The enzymatic reaction requires the aid of a Rab escort protein (also called component A). Catalyzes the transfer of a geranylgeranyl moiety from geranylgeranyl diphosphate to both cysteines of Rab proteins with the C-terminal sequence -XXCC, -XCXC and -CCXX, such as RAB1A, RAB3A, RAB5A and RAB7A. The protein is Geranylgeranyl transferase type-2 subunit beta (RABGGTB) of Homo sapiens (Human).